The sequence spans 64 residues: Large ribosomal subunit protein uL29 (64 aa).

It belongs to the universal ribosomal protein uL29 family.

The chain is Large ribosomal subunit protein uL29 from Cupriavidus metallidurans (strain ATCC 43123 / DSM 2839 / NBRC 102507 / CH34) (Ralstonia metallidurans).